Reading from the N-terminus, the 339-residue chain is Ketol-acid reductoisomerase (NADP(+)) (339 aa).

In terms of domain architecture, KARI N-terminal Rossmann spans 1 to 182; it reads MRVYYDRDAD…GGGRAGIIET (182 aa). Residues 24-27, R48, S51, T53, and 83-86 each bind NADP(+); these read YGSQ and DELQ. H108 is a catalytic residue. G134 provides a ligand contact to NADP(+). The KARI C-terminal knotted domain occupies 183 to 328; sequence TFKEECETDL…AKLRGMMPWI (146 aa). Mg(2+) is bound by residues D191, E195, E227, and E231. S252 provides a ligand contact to substrate.

Belongs to the ketol-acid reductoisomerase family. The cofactor is Mg(2+).

The catalysed reaction is (2R)-2,3-dihydroxy-3-methylbutanoate + NADP(+) = (2S)-2-acetolactate + NADPH + H(+). The enzyme catalyses (2R,3R)-2,3-dihydroxy-3-methylpentanoate + NADP(+) = (S)-2-ethyl-2-hydroxy-3-oxobutanoate + NADPH + H(+). It participates in amino-acid biosynthesis; L-isoleucine biosynthesis; L-isoleucine from 2-oxobutanoate: step 2/4. It functions in the pathway amino-acid biosynthesis; L-valine biosynthesis; L-valine from pyruvate: step 2/4. Functionally, involved in the biosynthesis of branched-chain amino acids (BCAA). Catalyzes an alkyl-migration followed by a ketol-acid reduction of (S)-2-acetolactate (S2AL) to yield (R)-2,3-dihydroxy-isovalerate. In the isomerase reaction, S2AL is rearranged via a Mg-dependent methyl migration to produce 3-hydroxy-3-methyl-2-ketobutyrate (HMKB). In the reductase reaction, this 2-ketoacid undergoes a metal-dependent reduction by NADPH to yield (R)-2,3-dihydroxy-isovalerate. This is Ketol-acid reductoisomerase (NADP(+)) from Methylorubrum populi (strain ATCC BAA-705 / NCIMB 13946 / BJ001) (Methylobacterium populi).